A 588-amino-acid chain; its full sequence is Protein POF1B (588 aa).

Coiled coils occupy residues 332–442 (STFS…VSET) and 502–530 (LHELTSLLEEKDSLIKRQSEELSKLRQEI).

In terms of assembly, interacts with nonmuscle actin.

It is found in the cell junction. The protein resides in the tight junction. Plays a key role in the organization of epithelial monolayers by regulating the actin cytoskeleton. May be involved in ovary development. This Pongo abelii (Sumatran orangutan) protein is Protein POF1B (POF1B).